The following is a 315-amino-acid chain: Ankyrin repeat domain-containing protein EMB506, chloroplastic (315 aa).

A chloroplast-targeting transit peptide spans 1–39 (MVSSVLSIPPQTCLLPRLPISDSVNCKSKIVYCLSTSVR). Positions 44 to 65 (KRQSTARTRSFTETNRRTPSVQ) are enriched in polar residues. The interval 44-106 (KRQSTARTRS…DNESDWEDDS (63 aa)) is disordered. A compositionally biased stretch (acidic residues) spans 72–104 (EDPDDGSDSENEYEGEEEDGIGNDLDNESDWED). ANK repeat units lie at residues 151-180 (KSWK…DIDD), 184-213 (DNQT…NPHL), 217-246 (DGAA…DVNV), 250-279 (EGWT…DKTR), and 283-307 (DGKL…VKLL).

As to quaternary structure, interacts with AKR. No homodimerization observed. In terms of tissue distribution, expressed in roots, inflorescence stems, flowers, siliques, dry seeds and mature cauline leaves.

The protein localises to the plastid. The protein resides in the chloroplast. In terms of biological role, involved in the initial differentiation of the proplastid during the embryo development. Also required for correct cotyledon, true leaf and cauline leaf margin development. The protein is Ankyrin repeat domain-containing protein EMB506, chloroplastic (EMB506) of Arabidopsis thaliana (Mouse-ear cress).